A 126-amino-acid polypeptide reads, in one-letter code: Fluoride-specific ion channel FluC 3 (126 aa).

The next 4 helical transmembrane spans lie at Met7 to Ile27, Leu37 to Phe57, Leu68 to Met87, and Ala101 to Gly121. Residues Gly79 and Thr82 each coordinate Na(+).

It belongs to the fluoride channel Fluc/FEX (TC 1.A.43) family.

Its subcellular location is the cell inner membrane. The enzyme catalyses fluoride(in) = fluoride(out). Its activity is regulated as follows. Na(+) is not transported, but it plays an essential structural role and its presence is essential for fluoride channel function. Fluoride-specific ion channel. Important for reducing fluoride concentration in the cell, thus reducing its toxicity. The polypeptide is Fluoride-specific ion channel FluC 3 (Yersinia pestis).